A 494-amino-acid polypeptide reads, in one-letter code: NAD(+) hydrolase ThsA (494 aa).

In terms of domain architecture, Deacetylase sirtuin-type spans 11-295; sequence ATDKEVLIKE…TILQRYCRSK (285 aa). NAD(+) is bound by residues Ala-30, Asp-119, and His-157. The active-site Proton acceptor is His-157. The tract at residues 296–494 is SLOG (STALD) domain, binds 3'cADPR; it reads ILISGSAVEY…KIITALRAGR (199 aa). 3'cADPR contacts are provided by Gly-300, Ser-301, Leu-339, Phe-370, Arg-388, Lys-405, Gly-416, and Glu-420.

This sequence belongs to the soluble Thoeris ThsA family. Homotetramer.

It is found in the cytoplasm. It catalyses the reaction NAD(+) + H2O = ADP-D-ribose + nicotinamide + H(+). Its activity is regulated as follows. Probably activated by a signal molecule generated by endogenous ThsB1 and/or ThsB2. Can also be activated by the signal generated by ThsB of B.cereus. The activating molecule might be 3' cyclic ADP-D-ribose (3'cADPR). In terms of biological role, probable NAD(+) hydrolyzing component (NADase) of the Thoeris antiviral defense system, composed of ThsA, TIR1 (thsB1) and TIR2 (thsB2). Activated by a signal molecule generated by endogenous TIR1, TIR2 or ThsB from B.cereus. After activation it binds and hydrolyzes NAD(+), leading to cell death and inhibition of phage replication. Expression of Thoeris in B.subtilis (strain BEST7003) confers resistance to phages phi29, phi3T, SPBeta, SBSphi11, SBSphi13, SBSphiJ, SPO1 and SPR but not SBSphiC. The TIR paralogs confer overlapping resistance to different phages. This is NAD(+) hydrolase ThsA from Cytobacillus dafuensis (Bacillus dafuensis).